The sequence spans 552 residues: Phosphoglucomutase (552 aa).

Catalysis depends on Ser143, which acts as the Phosphoserine intermediate. Mg(2+) is bound by residues Ser143, Asp295, Asp297, and Asp299.

The protein belongs to the phosphohexose mutase family. It depends on Mg(2+) as a cofactor.

It catalyses the reaction alpha-D-glucose 1-phosphate = alpha-D-glucose 6-phosphate. Its pathway is glycolipid metabolism; diglucosyl-diacylglycerol biosynthesis. Catalyzes the interconversion between glucose-6-phosphate and alpha-glucose-1-phosphate. This is the first step in the biosynthesis of diglucosyl-diacylglycerol (Glc2-DAG), i.e. the predominant glycolipid found in the S.aureus membrane, which is also used as a membrane anchor for lipoteichoic acid (LTA). This Staphylococcus aureus (strain Mu50 / ATCC 700699) protein is Phosphoglucomutase (pgcA).